The chain runs to 105 residues: Protein FAM24A (105 aa).

A signal peptide spans M1–C32.

This sequence belongs to the FAM24 family.

It localises to the secreted. This Homo sapiens (Human) protein is Protein FAM24A (FAM24A).